The chain runs to 296 residues: Mycothiol acetyltransferase (296 aa).

N-acetyltransferase domains follow at residues 8 to 146 and 151 to 296; these read RSPE…PPVE and ISVR…GPPV. Residue Glu39 participates in 1D-myo-inositol 2-(L-cysteinylamino)-2-deoxy-alpha-D-glucopyranoside binding. Residue 76–78 participates in acetyl-CoA binding; that stretch reads VVT. The 1D-myo-inositol 2-(L-cysteinylamino)-2-deoxy-alpha-D-glucopyranoside site is built by Glu178, Lys220, and Glu228. Residues 232–234 and 239–245 each bind acetyl-CoA; these read VGV and QGEGLGR. Tyr266 is a binding site for 1D-myo-inositol 2-(L-cysteinylamino)-2-deoxy-alpha-D-glucopyranoside.

This sequence belongs to the acetyltransferase family. MshD subfamily. Monomer.

The enzyme catalyses 1D-myo-inositol 2-(L-cysteinylamino)-2-deoxy-alpha-D-glucopyranoside + acetyl-CoA = mycothiol + CoA + H(+). Its function is as follows. Catalyzes the transfer of acetyl from acetyl-CoA to desacetylmycothiol (Cys-GlcN-Ins) to form mycothiol. In Kytococcus sedentarius (strain ATCC 14392 / DSM 20547 / JCM 11482 / CCUG 33030 / NBRC 15357 / NCTC 11040 / CCM 314 / 541) (Micrococcus sedentarius), this protein is Mycothiol acetyltransferase.